The following is a 600-amino-acid chain: Probable methyltransferase PMT21 (600 aa).

Residues 1–16 are Cytoplasmic-facing; that stretch reads MKYKDEKYEKAEKGSR. Residues 17–37 traverse the membrane as a helical; Signal-anchor for type II membrane protein segment; that stretch reads ILPKTVLLILLCGLSFYLGGL. Over 38-600 the chain is Lumenal; that stretch reads YCGKNIIEVS…YSSNASSETN (563 aa). Asn594 carries an N-linked (GlcNAc...) asparagine glycan.

The protein belongs to the methyltransferase superfamily.

The protein localises to the endoplasmic reticulum membrane. The sequence is that of Probable methyltransferase PMT21 (ERD3) from Arabidopsis thaliana (Mouse-ear cress).